A 216-amino-acid chain; its full sequence is Ribosomal RNA large subunit methyltransferase E (216 aa).

Gly60, Trp62, Asp80, Asp96, and Asp121 together coordinate S-adenosyl-L-methionine. Catalysis depends on Lys161, which acts as the Proton acceptor.

Belongs to the class I-like SAM-binding methyltransferase superfamily. RNA methyltransferase RlmE family.

The protein localises to the cytoplasm. It catalyses the reaction uridine(2552) in 23S rRNA + S-adenosyl-L-methionine = 2'-O-methyluridine(2552) in 23S rRNA + S-adenosyl-L-homocysteine + H(+). Specifically methylates the uridine in position 2552 of 23S rRNA at the 2'-O position of the ribose in the fully assembled 50S ribosomal subunit. The protein is Ribosomal RNA large subunit methyltransferase E of Pseudomonas syringae pv. syringae (strain B728a).